The sequence spans 704 residues: Glycine--tRNA ligase beta subunit (704 aa).

This sequence belongs to the class-II aminoacyl-tRNA synthetase family. Tetramer of two alpha and two beta subunits.

Its subcellular location is the cytoplasm. The enzyme catalyses tRNA(Gly) + glycine + ATP = glycyl-tRNA(Gly) + AMP + diphosphate. In Rhizobium etli (strain ATCC 51251 / DSM 11541 / JCM 21823 / NBRC 15573 / CFN 42), this protein is Glycine--tRNA ligase beta subunit.